The chain runs to 352 residues: Ion-translocating oxidoreductase complex subunit D (352 aa).

The next 4 helical transmembrane spans lie at 20–40, 44–64, 78–109, and 123–143; these read IMLL…WFFG, LFQI…VLSL, ALLT…IIIA, and PAMI…TSWL. FMN phosphoryl threonine is present on threonine 187. 5 helical membrane passes run 214–234, 242–262, 267–287, 301–321, and 322–342; these read VLAG…GVFL, WHIP…GWLF, LASP…FFIL, LIFG…GGYP, and DGVA…DYYT.

Belongs to the NqrB/RnfD family. In terms of assembly, the complex is composed of six subunits: RsxA, RsxB, RsxC, RsxD, RsxE and RsxG. The cofactor is FMN.

Its subcellular location is the cell inner membrane. Functionally, part of a membrane-bound complex that couples electron transfer with translocation of ions across the membrane. Required to maintain the reduced state of SoxR. The sequence is that of Ion-translocating oxidoreductase complex subunit D from Salmonella arizonae (strain ATCC BAA-731 / CDC346-86 / RSK2980).